Here is a 433-residue protein sequence, read N- to C-terminus: Probable exopolygalacturonase X (433 aa).

The first 21 residues, 1–21, serve as a signal peptide directing secretion; sequence MKLTQATTLLLSLGLSLPVEG. A disordered region spans residues 30–54; the sequence is VGPKPPFRPLPASTPRNKTCQVQSN. The span at 43–54 shows a compositional bias: polar residues; it reads TPRNKTCQVQSN. Asn46, Asn127, and Asn197 each carry an N-linked (GlcNAc...) asparagine glycan. One copy of the PbH1 1 repeat lies at 229–250; it reads SSNIVIQNSVINNGDDCVSFKP. The active-site Proton donor is the Asp243. Cysteines 245 and 262 form a disulfide. Asn251 and Asn263 each carry an N-linked (GlcNAc...) asparagine glycan. A PbH1 2 repeat occupies 252 to 272; sequence STEILVQNLHCNGSHGISVGS. The active site involves His266. N-linked (GlcNAc...) asparagine glycosylation is found at Asn290, Asn295, Asn327, Asn352, and Asn362. The stretch at 325–346 is one PbH1 3 repeat; sequence VQNITYDKMYIENVDWAIEVTQ. One copy of the PbH1 4 repeat lies at 360-403; the sequence is PSNLTISDVYFNDLTGVTSGKNDPNVGTIICSSPDVCSGIHATN. Cys390 and Cys396 are joined by a disulfide.

The protein belongs to the glycosyl hydrolase 28 family.

It localises to the secreted. It carries out the reaction [(1-&gt;4)-alpha-D-galacturonosyl](n) + H2O = alpha-D-galacturonate + [(1-&gt;4)-alpha-D-galacturonosyl](n-1). Its function is as follows. Specific in hydrolyzing the terminal glycosidic bond of polygalacturonic acid and oligogalacturonates. This Aspergillus flavus (strain ATCC 200026 / FGSC A1120 / IAM 13836 / NRRL 3357 / JCM 12722 / SRRC 167) protein is Probable exopolygalacturonase X (pgaX).